A 561-amino-acid polypeptide reads, in one-letter code: Putative transport protein AHA_2450 (561 aa).

Transmembrane regions (helical) follow at residues L8 to G28, I37 to F57, F66 to L86, I90 to L110, and N161 to V181. RCK C-terminal domains lie at S206 to N291 and K293 to F376. A run of 5 helical transmembrane segments spans residues L386–F406, L409–L429, L450–H470, A476–F496, and T541–F561.

This sequence belongs to the AAE transporter (TC 2.A.81) family. YbjL subfamily.

The protein localises to the cell membrane. This chain is Putative transport protein AHA_2450, found in Aeromonas hydrophila subsp. hydrophila (strain ATCC 7966 / DSM 30187 / BCRC 13018 / CCUG 14551 / JCM 1027 / KCTC 2358 / NCIMB 9240 / NCTC 8049).